Consider the following 92-residue polypeptide: C-C motif chemokine 22 (92 aa).

The signal sequence occupies residues 1–24 (MATLRVPLLVALVLLAVAIQTSDA). 2 cysteine pairs are disulfide-bonded: C36-C60 and C37-C76.

The protein belongs to the intercrine beta (chemokine CC) family. In terms of tissue distribution, expressed by activated splenic B-lymphocytes and dendritic cells. Low expression in lung, thymocytes, lymph node, and unstimulated splenic cells.

The protein resides in the secreted. Its function is as follows. Chemotactic for activated T-lymphocytes. May play an important role in the collaboration of dendritic cells and B-lymphocytes with T-cells in immune responses. This chain is C-C motif chemokine 22 (Ccl22), found in Mus musculus (Mouse).